A 533-amino-acid polypeptide reads, in one-letter code: Probable protein kinase UbiB (533 aa).

A helical membrane pass occupies residues 24–44 (LILELPMLPWWLRLLGATLPW). Positions 126–494 (RFEREPLASA…WKGSRHDWLG (369 aa)) constitute a Protein kinase domain. ATP is bound by residues 132-140 (LASASVAQV) and lysine 154. Catalysis depends on aspartate 289, which acts as the Proton acceptor. The helical transmembrane segment at 510–530 (LGQQLEAWPAWVMLAGGVFLI) threads the bilayer.

This sequence belongs to the ABC1 family. UbiB subfamily.

The protein resides in the cell inner membrane. The protein operates within cofactor biosynthesis; ubiquinone biosynthesis [regulation]. In terms of biological role, is probably a protein kinase regulator of UbiI activity which is involved in aerobic coenzyme Q (ubiquinone) biosynthesis. The sequence is that of Probable protein kinase UbiB from Pseudomonas aeruginosa (strain LESB58).